Reading from the N-terminus, the 349-residue chain is Draxin (349 aa).

A signal peptide spans 1 to 25 (MAGPAIHTAPMLFLVLLLPLELSLA). Disordered regions lie at residues 38-79 (PENH…QDGA), 118-145 (PYPE…RRDR), and 244-273 (DGWP…EGEP). A compositionally biased stretch (basic and acidic residues) spans 120–131 (PEKENRPPGWER). Composition is skewed to basic residues over residues 132–145 (TRKR…RRDR) and 249–258 (AKKKEKHRGK). The N-linked (GlcNAc...) asparagine glycan is linked to Asn-264.

Belongs to the draxin family. In terms of assembly, interacts with LRP6.

It localises to the secreted. Functionally, chemorepulsive axon guidance protein required for the development of spinal cord and forebrain commissures. Acts as a chemorepulsive guidance protein for commissural axons during development. Able to inhibit or repel neurite outgrowth from dorsal spinal cord. Inhibits the stabilization of cytosolic beta-catenin (CTNNB1) via its interaction with LRP6, thereby acting as an antagonist of Wnt signaling pathway. This Homo sapiens (Human) protein is Draxin.